The chain runs to 481 residues: ATP synthase subunit beta, plastid (481 aa).

162 to 169 (GGAGVGKT) lines the ATP pocket.

The protein belongs to the ATPase alpha/beta chains family. As to quaternary structure, F-type ATPases have 2 components, CF(1) - the catalytic core - and CF(0) - the membrane proton channel. CF(1) has five subunits: alpha(3), beta(3), gamma(1), delta(1), epsilon(1). CF(0) has four main subunits: a(1), b(1), b'(1) and c(9-12).

It localises to the plastid membrane. The enzyme catalyses ATP + H2O + 4 H(+)(in) = ADP + phosphate + 5 H(+)(out). Its function is as follows. Produces ATP from ADP in the presence of a proton gradient across the membrane. The catalytic sites are hosted primarily by the beta subunits. This Prototheca wickerhamii protein is ATP synthase subunit beta, plastid (atpB).